The primary structure comprises 990 residues: F-box/LRR-repeat protein 15 (990 aa).

The F-box domain occupies 190-236 (FEVHIDLTDDLLHMVFSFLNHVDLCRSAMVCRQWRVASAHEDFWRVL). LRR repeat units follow at residues 237 to 258 (NFENIRISMEQFENMCSRYPNA), 280 to 303 (LRNLEVLTIGKGHISESFFQALGE), 317 to 341 (LGNGAQEIHLSHDRLRELKITKCRV), 348 to 373 (CPQLRSLSLKRSNMSQAMLNCPLLQL), 397 to 423 (LESLDVSNCSCVSDETLREIAQACANL), 441 to 465 (LPMLTVLKLHSCEGITSASMTWIAN), 466 to 477 (SPALEVLELDNC), 478 to 503 (NLLTTVSLHLSRLQSISLVHCRKFTD), 519 to 542 (CPALRRITITSNALRRLALQKQEN), 550 to 574 (CHSLQEVDLSDCESLSNSVCKIFSD), 589 to 612 (CESLTAVRFCNSSLASLSLVGCRA), 614 to 633 (TSLELKCPRIEQICLDGCDH), 640 to 652 (QPVALRSLNLGIC), 653 to 678 (PKLSVLNIEAPYMVSLELKGCGVLSE), 734 to 756 (LPNLTVLDLSYTFLMNLEPVFKS), 758 to 782 (IQLKVLKLQACKYLTDSSLEPLYKE), 785 to 809 (LPALEELDLSYGTLCQTAIDDLLAC), 813 to 839 (LTHLSLNGCVNMHDLDWGSTSVHLFDY), 882 to 893 (FYHLSTLNLSLS), 894 to 914 (VNLKEVDLTCSNLVLLNLSNC), 915 to 937 (CSLEVLKLGCPRLASLFLQSCNM), and 949 to 973 (CSSLETLDLRFCPKISSVSMSKFRT).

This Arabidopsis thaliana (Mouse-ear cress) protein is F-box/LRR-repeat protein 15 (FBL15).